The sequence spans 243 residues: UPF0246 protein M6_Spy1787 (243 aa).

The protein belongs to the UPF0246 family.

The polypeptide is UPF0246 protein M6_Spy1787 (Streptococcus pyogenes serotype M6 (strain ATCC BAA-946 / MGAS10394)).